The sequence spans 311 residues: L-lactate dehydrogenase 2 (311 aa).

Val-14, Asp-35, and Arg-40 together coordinate NAD(+). Residue Arg-90 participates in substrate binding. NAD(+) contacts are provided by residues Ser-103, 120–122 (ATN), and Thr-145. Position 122 to 125 (122 to 125 (NPCD)) interacts with substrate. Substrate is bound at residue 150 to 153 (DTTR). The Proton acceptor role is filled by His-177. Position 230 (Thr-230) interacts with substrate.

It belongs to the LDH/MDH superfamily. LDH family. Homotetramer.

It localises to the cytoplasm. It carries out the reaction (S)-lactate + NAD(+) = pyruvate + NADH + H(+). The protein operates within fermentation; pyruvate fermentation to lactate; (S)-lactate from pyruvate: step 1/1. In terms of biological role, catalyzes the conversion of lactate to pyruvate. The polypeptide is L-lactate dehydrogenase 2 (Listeria innocua serovar 6a (strain ATCC BAA-680 / CLIP 11262)).